The sequence spans 105 residues: Co-chaperonin GroES 3 (105 aa).

The protein belongs to the GroES chaperonin family. In terms of assembly, heptamer of 7 subunits arranged in a ring. Interacts with the chaperonin GroEL.

It is found in the cytoplasm. In terms of biological role, together with the chaperonin GroEL, plays an essential role in assisting protein folding. The GroEL-GroES system forms a nano-cage that allows encapsulation of the non-native substrate proteins and provides a physical environment optimized to promote and accelerate protein folding. GroES binds to the apical surface of the GroEL ring, thereby capping the opening of the GroEL channel. This chain is Co-chaperonin GroES 3, found in Rhizobium meliloti (strain 1021) (Ensifer meliloti).